Here is a 500-residue protein sequence, read N- to C-terminus: MSIMPVKNALAQGRTLLMGRMPAVKFSTRMQLRNRTAVLWNRKFSTRLFVQQRRSSGEIVDRAKAAAANSGRKQVSMKWVVLTSFTIVLGTILLVSRNDSTEEDATEGKKGRRTRKIKIFNNNWLFFCYSTLPLNAMSRLWGQVNSLTLPIWVRPWGYRLYSFLFGVNLDEMEDPDLTHYANLSEFFYRNIKPGTRPVAQGEDVIASPSDGKILQVGIINSETGEIEQVKGMTYSIKEFLGTHSHPLMSKSASSLDLTSDEEKHREFARVNRIQLAGSEDTEQPLLNFKNEGDQSVREFKPSVSKNIHLLSQLSLNYFSNGFSCSEPHDTELFFAVIYLAPGDYHHFHSPVDWVCKVRRHFPGDLFSVAPYFQRNFPNLFVLNERVALLGSWKYGFFSMTPVGATNVGSIKLNFDQEFVTNSKSDKHLEPHTCYQAVYENASKILGGMPLVKGEEMGGFELGSTVVLCFEAPTEFKFDVRVGDKVKMGQKLGIIGKNDLK.

Residues 1–48 (MSIMPVKNALAQGRTLLMGRMPAVKFSTRMQLRNRTAVLWNRKFSTRL) constitute a mitochondrion; not cleaved when targeted to the endoplasmic reticulum transit peptide. N-linked (GlcNAc...) asparagine glycosylation occurs at Asn34. Over 45–79 (STRLFVQQRRSSGEIVDRAKAAAANSGRKQVSMKW) the chain is Mitochondrial matrix. An enables targeting to the endoplasmic reticulum in addition to mitochondria region spans residues 57–101 (GEIVDRAKAAAANSGRKQVSMKWVVLTSFTIVLGTILLVSRNDST). Residues 80–98 (VVLTSFTIVLGTILLVSRN) form a helical membrane-spanning segment. The Mitochondrial intermembrane portion of the chain corresponds to 99–500 (DSTEEDATEG…LGIIGKNDLK (402 aa)). Active-site charge relay system; for autoendoproteolytic cleavage activity residues include Asp210, His348, and Ser463. The Schiff-base intermediate with substrate; via pyruvic acid; for decarboxylase activity role is filled by Ser463. Ser463 is subject to Pyruvic acid (Ser); by autocatalysis. The tract at residues 475–492 (FKFDVRVGDKVKMGQKLG) is required for processing and stability.

The protein belongs to the phosphatidylserine decarboxylase family. PSD-B subfamily. Eukaryotic type I sub-subfamily. Heterodimer of a large membrane-associated beta subunit and a small pyruvoyl-containing alpha subunit. Requires pyruvate as cofactor. In terms of processing, glycosylated at Asn-34 in the endoplasmic reticulum. Post-translationally, the precursor is imported via the TOM complex into mitochondria, where the N-terminal presequence is cleaved by the matrix-located proteases MPP (MAS1-MAS2) and OCT1. Is synthesized initially as an inactive proenzyme. Formation of the active enzyme involves a self-maturation process in which the active site pyruvoyl group is generated from an internal serine residue via an autocatalytic post-translational modification. Two non-identical subunits are generated from the proenzyme in this reaction, and the pyruvate is formed at the N-terminus of the alpha chain, which is derived from the carboxyl end of the proenzyme. The autoendoproteolytic cleavage occurs by a canonical serine protease mechanism, in which the side chain hydroxyl group of the serine supplies its oxygen atom to form the C-terminus of the beta chain, while the remainder of the serine residue undergoes an oxidative deamination to produce ammonia and the pyruvoyl prosthetic group on the alpha chain. During this reaction, the Ser that is part of the protease active site of the proenzyme becomes the pyruvoyl prosthetic group, which constitutes an essential element of the active site of the mature decarboxylase.

It localises to the mitochondrion inner membrane. The protein resides in the lipid droplet. Its subcellular location is the endoplasmic reticulum membrane. It catalyses the reaction a 1,2-diacyl-sn-glycero-3-phospho-L-serine + H(+) = a 1,2-diacyl-sn-glycero-3-phosphoethanolamine + CO2. It participates in phospholipid metabolism; phosphatidylethanolamine biosynthesis; phosphatidylethanolamine from CDP-diacylglycerol: step 2/2. In terms of biological role, catalyzes the formation of phosphatidylethanolamine (PtdEtn) from phosphatidylserine (PtdSer). Plays a central role in phospholipid metabolism and in the interorganelle trafficking of phosphatidylserine. Phosphatidylethanolamine formed in the mitochondria is exported to other membranes to fullfill their requirements for PtdEtn. Required for normal mitochondrial morphology and proper mitochondrial fusion during yeast mating. Involved in lipid droplet biogenesis at the endoplasmic reticulum membrane. Required for induction of mitophagy during nitrogen starvation. Appears to play a specific role in supporting respiratory complex III activity. The protein is Phosphatidylserine decarboxylase proenzyme 1, mitochondrial of Saccharomyces cerevisiae (strain ATCC 204508 / S288c) (Baker's yeast).